The following is a 122-amino-acid chain: Large ribosomal subunit protein uL14 (122 aa).

Belongs to the universal ribosomal protein uL14 family. In terms of assembly, part of the 50S ribosomal subunit. Forms a cluster with proteins L3 and L19. In the 70S ribosome, L14 and L19 interact and together make contacts with the 16S rRNA in bridges B5 and B8.

Functionally, binds to 23S rRNA. Forms part of two intersubunit bridges in the 70S ribosome. The sequence is that of Large ribosomal subunit protein uL14 from Mycolicibacterium gilvum (strain PYR-GCK) (Mycobacterium gilvum (strain PYR-GCK)).